The following is a 366-amino-acid chain: IgG receptor FcRn large subunit p51 (366 aa).

Residues 1-22 (MGMSQPGVLLSLLLVLLPQTWG) form the signal peptide. The alpha-1 stretch occupies residues 23–111 (AEPRLPLMYH…RTLENQINGT (89 aa)). The Extracellular segment spans residues 23–298 (AEPRLPLMYH…VDLDSPARSS (276 aa)). Asn109, Asn126, Asn150, and Asn247 each carry an N-linked (GlcNAc...) asparagine glycan. The segment at 112–201 (FTLQGLLGCE…ERGRQNLEWK (90 aa)) is alpha-2. 2 cysteine pairs are disulfide-bonded: Cys120-Cys183 and Cys222-Cys276. The interval 202–291 (EPPSMRLKAR…GLAQPLTVDL (90 aa)) is alpha-3. One can recognise an Ig-like C1-type domain in the interval 203–290 (PPSMRLKARP…EGLAQPLTVD (88 aa)). The connecting peptide stretch occupies residues 293-298 (SPARSS). A helical transmembrane segment spans residues 299–322 (VPVVGIILGLLLVVVAIAGGVLLW). At 323-366 (NRMRSGLPAPWLSLSGDDSGDLLPGGNLPPEAEPQGVNAFPATS) the chain is on the cytoplasmic side. At Ser335 the chain carries Phosphoserine. Residues 344–366 (LLPGGNLPPEAEPQGVNAFPATS) are disordered.

It belongs to the immunoglobulin superfamily. FcRn complex consists of two subunits: p51, and p14 which is equivalent to beta-2-microglobulin. It forms an MHC class I-like heterodimer. Interacts with albumin/ALB; this interaction regulates ALB homeostasis. Intestinal epithelium.

The protein resides in the cell membrane. It localises to the endosome membrane. Cell surface receptor that transfers passive humoral immunity from the mother to the newborn. Binds to the Fc region of monomeric immunoglobulin gamma and mediates its selective uptake from milk. IgG in the milk is bound at the apical surface of the intestinal epithelium. The resultant FcRn-IgG complexes are transcytosed across the intestinal epithelium and IgG is released from FcRn into blood or tissue fluids. Throughout life, contributes to effective humoral immunity by recycling IgG and extending its half-life in the circulation. Mechanistically, monomeric IgG binding to FcRn in acidic endosomes of endothelial and hematopoietic cells recycles IgG to the cell surface where it is released into the circulation. In addition of IgG, regulates homeostasis of the other most abundant circulating protein albumin/ALB. This is IgG receptor FcRn large subunit p51 (Fcgrt) from Rattus norvegicus (Rat).